Here is a 387-residue protein sequence, read N- to C-terminus: MANDFLFTSESVSEGHPDKVADQISDAVLDAILAQDKYARVAAETLCNTGLVVLAGEITTTANVDYIQVARDTIKRIGYDNTEYGIDYKGCAVLVAYDKQSPDIAQGVDRASDDYLNQGAGDQGLMFGYACDETPELMPFPIYYSHRLVERQSQLRRDGRLPWLRPDAKSQVTVRYVDGRPHSVDTVVLSTQHAPDITQAQIREAVIEEIIKPVLPPEMLKDTKYLVNPTGRFVIGGPQGDCGLTGRKIIVDTYGGASPHGGGAFSGKDPSKVDRSAAYAARYVAKNVVAAGLARQCQVQVSYAIGVARPINVTVYTEGTGKISDAKIAELVQEHFDLRPKGIVQMLDLLRPIYEKTAAYGHFGREEPEFSWEATDKAAILRAAAGL.

His-16 contributes to the ATP binding site. Position 18 (Asp-18) interacts with Mg(2+). Glu-44 contributes to the K(+) binding site. L-methionine-binding residues include Glu-57 and Gln-100. The interval 100–110 is flexible loop; sequence QSPDIAQGVDR. Residues 167-169, 232-233, Asp-241, 247-248, Ala-264, and Lys-268 each bind ATP; these read DAK, RF, and RK. Asp-241 serves as a coordination point for L-methionine. An L-methionine-binding site is contributed by Lys-272.

It belongs to the AdoMet synthase family. Homotetramer; dimer of dimers. The cofactor is Mg(2+). It depends on K(+) as a cofactor.

Its subcellular location is the cytoplasm. The catalysed reaction is L-methionine + ATP + H2O = S-adenosyl-L-methionine + phosphate + diphosphate. Its pathway is amino-acid biosynthesis; S-adenosyl-L-methionine biosynthesis; S-adenosyl-L-methionine from L-methionine: step 1/1. Catalyzes the formation of S-adenosylmethionine (AdoMet) from methionine and ATP. The overall synthetic reaction is composed of two sequential steps, AdoMet formation and the subsequent tripolyphosphate hydrolysis which occurs prior to release of AdoMet from the enzyme. The polypeptide is S-adenosylmethionine synthase (Cupriavidus pinatubonensis (strain JMP 134 / LMG 1197) (Cupriavidus necator (strain JMP 134))).